The sequence spans 273 residues: MSTIRPVFYVSDGTGITAETIGHSLLTQFSGFNFVTDRMSFIDDADKARDAAMRVRAAGERYQVRPVVVNSCVDPQLSMILAESGALMLDVFAPFIEPLERELNAPRHSRVGRAHGMVDFETYHRRINAMNFALSHDDGIALNYDEADVILVAVSRAGKTPTCIYLALHYGIRAANYPLTDEDLENEQLPPRLRNYRSKLFGLTIDPERLQQIRQERRANSRYSAAETCRREVAIAERMFQMERIPSLSTTNTSIEEISSKVLSTLGLQREMF.

153–160 contributes to the ADP binding site; sequence AVSRAGKT.

The protein belongs to the pyruvate, phosphate/water dikinase regulatory protein family. PSRP subfamily.

The enzyme catalyses [pyruvate, water dikinase] + ADP = [pyruvate, water dikinase]-phosphate + AMP + H(+). It carries out the reaction [pyruvate, water dikinase]-phosphate + phosphate + H(+) = [pyruvate, water dikinase] + diphosphate. In terms of biological role, bifunctional serine/threonine kinase and phosphorylase involved in the regulation of the phosphoenolpyruvate synthase (PEPS) by catalyzing its phosphorylation/dephosphorylation. In Xanthomonas axonopodis pv. citri (strain 306), this protein is Putative phosphoenolpyruvate synthase regulatory protein.